The following is a 179-amino-acid chain: Laminin-binding fimbrial subunit ElfA (179 aa).

Positions methionine 1–alanine 21 are cleaved as a signal peptide.

It belongs to the fimbrial protein family.

The protein localises to the fimbrium. Its function is as follows. Part of the elfADCG fimbrial operon, which could be required for adherence to host epithelial cells. ElfA is an accessory colonization factor that contributes to adherence of bacteria to human intestinal epithelial cells and to animal intestinal tissue in vitro. Binds specifically to laminin, but not to fibronectin or collagen type IV. The sequence is that of Laminin-binding fimbrial subunit ElfA (elfA) from Escherichia coli O157:H7.